The sequence spans 567 residues: Thiol:disulfide interchange protein DsbD (567 aa).

The N-terminal stretch at 1-19 (MAQRIFTLILLLCSTSAFA) is a signal peptide. Intrachain disulfides connect Cys-122-Cys-128 and Cys-185-Cys-307. 8 consecutive transmembrane segments (helical) span residues 166-186 (LPFS…TPCV), 211-231 (LLAF…GLVV), 246-266 (YVLI…FGLF), 299-319 (IAGL…LLYI), 326-346 (WLGG…LMLV), 360-380 (WMAH…VFLL), 387-407 (AWGL…AFIT), and 418-438 (IVQI…QDWA). Positions 435 to 567 (QDWAFGSPSA…FSAHLHDRQP (133 aa)) constitute a Thioredoxin domain. Cys-482 and Cys-485 are oxidised to a cystine.

It belongs to the thioredoxin family. DsbD subfamily.

Its subcellular location is the cell inner membrane. It carries out the reaction [protein]-dithiol + NAD(+) = [protein]-disulfide + NADH + H(+). It catalyses the reaction [protein]-dithiol + NADP(+) = [protein]-disulfide + NADPH + H(+). Required to facilitate the formation of correct disulfide bonds in some periplasmic proteins and for the assembly of the periplasmic c-type cytochromes. Acts by transferring electrons from cytoplasmic thioredoxin to the periplasm. This transfer involves a cascade of disulfide bond formation and reduction steps. This is Thiol:disulfide interchange protein DsbD from Salmonella paratyphi A (strain ATCC 9150 / SARB42).